The sequence spans 438 residues: Mannan endo-1,4-beta-mannosidase F (438 aa).

The N-terminal stretch at 1–17 (MHPLPSVALLSAIGAVA) is a signal peptide. In terms of domain architecture, CBM1 spans 19 to 54 (QVGPWGQCGGRSYTGETSCVSGWSCVLFNEWYSQCQ). The ser-rich linker stretch occupies residues 60–96 (STSSVSATAAPSSTSSSKESVPSATTSKKPVPTGSSS). Residues 61 to 86 (TSSVSATAAPSSTSSSKESVPSATTS) show a composition bias toward low complexity. The disordered stretch occupies residues 61-92 (TSSVSATAAPSSTSSSKESVPSATTSKKPVPT). A catalytic region spans residues 97–438 (FVKADGLKFN…CGVADHLSTL (342 aa)). Residues tryptophan 149 and asparagine 263 each contribute to the substrate site. Residue glutamate 264 is the Proton donor of the active site. Residue asparagine 277 is glycosylated (N-linked (GlcNAc...) asparagine). A substrate-binding site is contributed by tyrosine 339. The Nucleophile role is filled by glutamate 373. Substrate is bound at residue tryptophan 402.

It belongs to the glycosyl hydrolase 5 (cellulase A) family.

Its subcellular location is the secreted. The enzyme catalyses Random hydrolysis of (1-&gt;4)-beta-D-mannosidic linkages in mannans, galactomannans and glucomannans.. Its function is as follows. Endo-1,4-mannanase, a crucial enzyme for depolymerization of seed galactomannans and wood galactoglucomannans. The chain is Mannan endo-1,4-beta-mannosidase F (manF) from Aspergillus fumigatus (strain ATCC MYA-4609 / CBS 101355 / FGSC A1100 / Af293) (Neosartorya fumigata).